Here is a 96-residue protein sequence, read N- to C-terminus: (4S)-4-hydroxy-5-phosphonooxypentane-2,3-dione isomerase (96 aa).

In terms of domain architecture, ABM spans H2 to F91.

It belongs to the LsrG family. In terms of assembly, homodimer.

The protein resides in the cytoplasm. It carries out the reaction (2S)-2-hydroxy-3,4-dioxopentyl phosphate = 3-hydroxy-2,4-dioxopentyl phosphate. Involved in the degradation of phospho-AI-2, thereby terminating induction of the lsr operon and closing the AI-2 signaling cycle. Catalyzes the conversion of (4S)-4-hydroxy-5-phosphonooxypentane-2,3-dione (P-DPD) to 3-hydroxy-5-phosphonooxypentane-2,4-dione (P-HPD). In Yersinia enterocolitica serotype O:8 / biotype 1B (strain NCTC 13174 / 8081), this protein is (4S)-4-hydroxy-5-phosphonooxypentane-2,3-dione isomerase.